We begin with the raw amino-acid sequence, 117 residues long: Large ribosomal subunit protein uL18 (117 aa).

Belongs to the universal ribosomal protein uL18 family. As to quaternary structure, part of the 50S ribosomal subunit; part of the 5S rRNA/L5/L18/L25 subcomplex. Contacts the 5S and 23S rRNAs.

Its function is as follows. This is one of the proteins that bind and probably mediate the attachment of the 5S RNA into the large ribosomal subunit, where it forms part of the central protuberance. In Pectobacterium atrosepticum (strain SCRI 1043 / ATCC BAA-672) (Erwinia carotovora subsp. atroseptica), this protein is Large ribosomal subunit protein uL18.